A 217-amino-acid polypeptide reads, in one-letter code: UPF0111 protein MTH_1689 (217 aa).

This sequence belongs to the UPF0111 family.

The sequence is that of UPF0111 protein MTH_1689 from Methanothermobacter thermautotrophicus (strain ATCC 29096 / DSM 1053 / JCM 10044 / NBRC 100330 / Delta H) (Methanobacterium thermoautotrophicum).